The primary structure comprises 316 residues: UDP-N-acetylenolpyruvoylglucosamine reductase (316 aa).

An FAD-binding PCMH-type domain is found at 30–194 (VGGEADYLVF…LSVKFALAPG (165 aa)). Arg173 is an active-site residue. Ser223 acts as the Proton donor in catalysis. Glu293 is a catalytic residue.

The protein belongs to the MurB family. FAD serves as cofactor.

The protein resides in the cytoplasm. It carries out the reaction UDP-N-acetyl-alpha-D-muramate + NADP(+) = UDP-N-acetyl-3-O-(1-carboxyvinyl)-alpha-D-glucosamine + NADPH + H(+). Its pathway is cell wall biogenesis; peptidoglycan biosynthesis. In terms of biological role, cell wall formation. The chain is UDP-N-acetylenolpyruvoylglucosamine reductase from Streptococcus pneumoniae serotype 19F (strain G54).